We begin with the raw amino-acid sequence, 637 residues long: Chaperone protein DnaK (637 aa).

Phosphothreonine; by autocatalysis is present on Thr-196. Disordered stretches follow at residues Lys-484–Thr-528 and Thr-598–Lys-637. Residues Ser-501–Thr-528 are compositionally biased toward basic and acidic residues. Residues Ala-600–Ser-620 show a composition bias toward low complexity. Basic and acidic residues predominate over residues Gly-621 to Lys-637.

The protein belongs to the heat shock protein 70 family.

Functionally, acts as a chaperone. In Chloroherpeton thalassium (strain ATCC 35110 / GB-78), this protein is Chaperone protein DnaK.